Consider the following 271-residue polypeptide: Mannosyl-3-phosphoglycerate phosphatase (271 aa).

Asp-13 (nucleophile) is an active-site residue. The Mg(2+) site is built by Asp-13, Asp-15, and Asp-214.

It belongs to the HAD-like hydrolase superfamily. MPGP family. It depends on Mg(2+) as a cofactor.

It localises to the cytoplasm. The catalysed reaction is 2-O-(alpha-D-mannosyl)-3-phosphoglycerate + H2O = (2R)-2-O-(alpha-D-mannosyl)-glycerate + phosphate. This is Mannosyl-3-phosphoglycerate phosphatase (yedP) from Escherichia coli O6:K15:H31 (strain 536 / UPEC).